Consider the following 435-residue polypeptide: Methylenetetrahydrofolate--tRNA-(uracil-5-)-methyltransferase TrmFO (435 aa).

10–15 is a binding site for FAD; it reads GAGLAG.

Belongs to the MnmG family. TrmFO subfamily. Homodimer. FAD serves as cofactor.

The protein localises to the cytoplasm. The enzyme catalyses uridine(54) in tRNA + (6R)-5,10-methylene-5,6,7,8-tetrahydrofolate + NADH + H(+) = 5-methyluridine(54) in tRNA + (6S)-5,6,7,8-tetrahydrofolate + NAD(+). The catalysed reaction is uridine(54) in tRNA + (6R)-5,10-methylene-5,6,7,8-tetrahydrofolate + NADPH + H(+) = 5-methyluridine(54) in tRNA + (6S)-5,6,7,8-tetrahydrofolate + NADP(+). In terms of biological role, catalyzes the folate-dependent formation of 5-methyl-uridine at position 54 (M-5-U54) in all tRNAs. This Bacillus subtilis (strain 168) protein is Methylenetetrahydrofolate--tRNA-(uracil-5-)-methyltransferase TrmFO.